The primary structure comprises 442 residues: MINSTNLNLTIKMSRPDEEELVDYDEAAEEILPPAPAAETNGDKADGDKKGSYVGIHSTGFRDFLLKPELLRAISDLGFEHPSEVQQECIPQAILGTDVLCQAKSGMGKTAVFVLAALQQIEPVDGEVSIIILCHTRELAYQIKNEFTRFSKFMTNVRTGVFYGGTPISADQEILANKEKCPHIVVGTPGRTMALVRDKKLNASKVKHFVLDECDKMLEQLDMRRDVQEIFRATPHHKQVMMFSATLSKDIRATCKKFMQSPLEIYVDDETKLTLHGLQQFYLKLEEREKNRKLNDLLDNLEFNQVCIFVKSVQRATQLDALLQECNFPSICIHSGLQQAERISRFQQFKAFEKRILVATDIFGRGIDVERVNVVINYDAPSDADSYLHRVGRAGRFGTKGLAISFVSSDADQEVLQRIQERFTVAIPTLPETVDPATYMTS.

Residues 59–87 (TGFRDFLLKPELLRAISDLGFEHPSEVQQ) carry the Q motif motif. Positions 90–265 (IPQAILGTDV…KKFMQSPLEI (176 aa)) constitute a Helicase ATP-binding domain. Residue 103–110 (AKSGMGKT) coordinates ATP. Positions 212-215 (DECD) match the DECD box motif. The region spanning 277–438 (GLQQFYLKLE…TLPETVDPAT (162 aa)) is the Helicase C-terminal domain.

It belongs to the DEAD box helicase family. DECD subfamily.

It is found in the nucleus. It catalyses the reaction ATP + H2O = ADP + phosphate + H(+). In terms of biological role, ATP-binding RNA helicase involved in transcription elongation and required for the export of mRNA out of the nucleus. SUB2 also plays a role in pre-mRNA splicing and spliceosome assembly. May be involved in rDNA and telomeric silencing, and maintenance of genome integrity. This is ATP-dependent RNA helicase SUB2 (SUB2) from Cryptococcus neoformans var. neoformans serotype D (strain JEC21 / ATCC MYA-565) (Filobasidiella neoformans).